Consider the following 694-residue polypeptide: Transcriptional activator HAA1 (694 aa).

Positions 1 to 40 (MVLINGIKYACERCIRGHRVTTCNHTDQPLMMIKPKGRPS) form a DNA-binding region, copper-fist. 4 residues coordinate Zn(2+): cysteine 11, cysteine 14, cysteine 23, and histidine 25. 2 disordered regions span residues 104–128 (QKRH…SQPM) and 209–240 (FNFL…DSSV). Over residues 111–126 (SPSSSQKKGRSISRSQ) the composition is skewed to polar residues. Phosphoserine occurs at positions 125, 231, 241, and 291. Disordered stretches follow at residues 332 to 388 (FDIN…NGLF), 479 to 514 (EKER…HRYP), 566 to 588 (SSIH…SRQD), and 650 to 677 (MIST…PPSQ). A compositionally biased stretch (polar residues) spans 336–349 (DNCNRINSKSYSKT). Over residues 350–378 (NSMNGNGMNNSNNNNINSNGNDKNNNNSS) the composition is skewed to low complexity. Polar residues-rich tracts occupy residues 566 to 577 (SSIHSVPQSINS) and 664 to 677 (SPMS…PPSQ).

The protein localises to the nucleus. Its function is as follows. Regulates the transcription of a set of genes, many of which encode membrane proteins. Among the genes regulated are YGR138C and YRO2. Does not seem to be dependent on copper. The chain is Transcriptional activator HAA1 (HAA1) from Saccharomyces cerevisiae (strain ATCC 204508 / S288c) (Baker's yeast).